The sequence spans 93 residues: Cobalt transport protein CbiN (93 aa).

The next 2 helical transmembrane spans lie at 5–25 and 63–83; these read LILL…NHGG and LLFT…LGYA.

Belongs to the CbiN family. Forms an energy-coupling factor (ECF) transporter complex composed of an ATP-binding protein (A component, CbiO), a transmembrane protein (T component, CbiQ) and 2 possible substrate-capture proteins (S components, CbiM and CbiN) of unknown stoichimetry.

It is found in the cell inner membrane. Its pathway is cofactor biosynthesis; adenosylcobalamin biosynthesis. Its function is as follows. Part of the energy-coupling factor (ECF) transporter complex CbiMNOQ involved in cobalt import. The sequence is that of Cobalt transport protein CbiN from Klebsiella pneumoniae subsp. pneumoniae (strain ATCC 700721 / MGH 78578).